We begin with the raw amino-acid sequence, 121 residues long: Darcynin homolog (121 aa).

It belongs to the darcynin family.

The protein is Darcynin homolog of Streptomyces avermitilis (strain ATCC 31267 / DSM 46492 / JCM 5070 / NBRC 14893 / NCIMB 12804 / NRRL 8165 / MA-4680).